The sequence spans 155 residues: MSAVAINHFFGLPEAIEKLILPISRSGESNNESRGRGSSNNIPIDILESPKEYIFYLDIPGISKSDIQVTVEEERTLVIKSNGKRKRDDDESEEGSKYIRLERRLAQNLVKKFRLPEDADMASVTAKYQEGVLTVVIKKLPPQPPKPKTVQIAVS.

The region spanning 35–155 is the sHSP domain; that stretch reads GRGSSNNIPI…KPKTVQIAVS (121 aa).

This sequence belongs to the small heat shock protein (HSP20) family. May form oligomeric structures.

Its subcellular location is the cytoplasm. This Arabidopsis thaliana (Mouse-ear cress) protein is 17.4 kDa class III heat shock protein (HSP17.4B).